The primary structure comprises 284 residues: MVQIIDGKALAQKMQAALAKKVESLKAEKGIVPGLVVILVGDNPASQVYVRNKERAALAAGFKSETVRLSDSVCQEELIELIEQYNQDDTIHGILVQLPLPHHINDKSIILAIDPKKDVDGFHPMNTGHLWSGRPNMVPCTPAGIMEMFRDYGIELEGKNAVIVGRSNIVGKPMAQLLLDKNATVTLTHSRTRQLAAICRRADILIVAIGQGHFITKDFVKEGAVVIDVGMNRDVNGRLIGDVAFDEVSELASMITPVPGGVGPMTITMLLEQTYQAALRRVSQ.

Residues 165–167 (GRS) and Ser-190 contribute to the NADP(+) site.

This sequence belongs to the tetrahydrofolate dehydrogenase/cyclohydrolase family. Homodimer.

It catalyses the reaction (6R)-5,10-methylene-5,6,7,8-tetrahydrofolate + NADP(+) = (6R)-5,10-methenyltetrahydrofolate + NADPH. The enzyme catalyses (6R)-5,10-methenyltetrahydrofolate + H2O = (6R)-10-formyltetrahydrofolate + H(+). It participates in one-carbon metabolism; tetrahydrofolate interconversion. In terms of biological role, catalyzes the oxidation of 5,10-methylenetetrahydrofolate to 5,10-methenyltetrahydrofolate and then the hydrolysis of 5,10-methenyltetrahydrofolate to 10-formyltetrahydrofolate. This Streptococcus equi subsp. zooepidemicus (strain MGCS10565) protein is Bifunctional protein FolD.